The following is a 186-amino-acid chain: Translation initiation factor IF-3 (186 aa).

A disordered region spans residues 1–20 (MINRNSGKDRDRSRSGDKEL).

Belongs to the IF-3 family. In terms of assembly, monomer.

The protein localises to the cytoplasm. Its function is as follows. IF-3 binds to the 30S ribosomal subunit and shifts the equilibrium between 70S ribosomes and their 50S and 30S subunits in favor of the free subunits, thus enhancing the availability of 30S subunits on which protein synthesis initiation begins. This Borrelia duttonii (strain Ly) protein is Translation initiation factor IF-3.